The primary structure comprises 262 residues: MSGRIPNHGYMQPASISATSCGHDYQFPTLANSESDLLEEDAEEFELRPRGKEKTRRSTSKERIDDIVYISRDICEGDTLNSIALQYCCTVADLKRANNFLNEQDFFALRTIKIPVKRFSVLTQPHFSPKAKATRPGTLQLSPEHQESDLLIGPSSYETAGSFLQEVDRDIEKIVKSTDTKKESLNEVVSALSQEHFEPEQILVPQRDPYHGADWSLGWWTAVAIMVFVGIITPLFYFLYYEVLMKVNTSHTLNSIEKSGPS.

Over 1–218 the chain is Extracellular; it reads MSGRIPNHGY…PYHGADWSLG (218 aa). The LysM domain maps to 70 to 114; sequence ISRDICEGDTLNSIALQYCCTVADLKRANNFLNEQDFFALRTIKI. The chain crosses the membrane as a helical span at residues 219 to 239; it reads WWTAVAIMVFVGIITPLFYFL. The Cytoplasmic segment spans residues 240-262; that stretch reads YYEVLMKVNTSHTLNSIEKSGPS.

Its subcellular location is the cell membrane. It is found in the golgi apparatus. Essential for Golgi structural integrity. The chain is LysM and putative peptidoglycan-binding domain-containing protein 3 (lysmd3) from Xenopus tropicalis (Western clawed frog).